The primary structure comprises 350 residues: Ion-translocating oxidoreductase complex subunit D (350 aa).

5 helical membrane-spanning segments follow: residues 20 to 40 (VMVLVILCLIPGVFLQSYFFG), 44 to 64 (LIQISLACLAALASEAFILKI), 68 to 88 (PVLNTLKDASALLTAILLAIS), 89 to 109 (IPPLAPWWIVVIGTIFAIIFV), and 125 to 145 (MAGYVLLLISFPVQMTSWLPV). The residue at position 187 (T187) is an FMN phosphoryl threonine. The next 5 helical transmembrane spans lie at 215–235 (SWQQIYWINGAFLAGGLILLF), 241–261 (WHIPMSFLLGIGIFSFIAFAY), 267–287 (APPLFHLFSGATMLGAFFILS), 300–320 (ILYALLIAFIVVIIRNVGGYP), and 322–342 (AVAFAVLLGNMCVPLIDYYTQ).

Belongs to the NqrB/RnfD family. The complex is composed of six subunits: RnfA, RnfB, RnfC, RnfD, RnfE and RnfG. The cofactor is FMN.

It localises to the cell inner membrane. Functionally, part of a membrane-bound complex that couples electron transfer with translocation of ions across the membrane. In Psychromonas ingrahamii (strain DSM 17664 / CCUG 51855 / 37), this protein is Ion-translocating oxidoreductase complex subunit D.